The primary structure comprises 474 residues: Shufflon protein A (474 aa).

The tract at residues 1-361 (MKKYDRGWAS…TGAILSCQSG (361 aa)) is constant region. Residues 362–474 (TWKTSGSLNG…GVFSVFGYQT (113 aa)) are variable region.

This chain is Shufflon protein A, found in Escherichia coli.